A 130-amino-acid chain; its full sequence is Small ribosomal subunit protein uS8 (130 aa).

This sequence belongs to the universal ribosomal protein uS8 family. In terms of assembly, part of the 30S ribosomal subunit.

Functionally, one of the primary rRNA binding proteins, it binds directly to 16S rRNA central domain where it helps coordinate assembly of the platform of the 30S subunit. This chain is Small ribosomal subunit protein uS8, found in Nitrosopumilus maritimus (strain SCM1).